A 179-amino-acid polypeptide reads, in one-letter code: SCAN domain-containing protein 1 (179 aa).

A disordered region spans residues 1 to 108 (MAATEPILAA…GSRLGPETFR (108 aa)). Residues 60–80 (AIPTPQAAASAAPELPLGPAP) show a composition bias toward low complexity. An SCAN box domain is found at 108–166 (RQRFRQFRYQDAAGPREAFRQLRELSRQWLRPDIRTKEQIVEMLVQEQLLAILPEAARA).

In terms of assembly, interacts with ZNF202.

It localises to the nucleus. In terms of biological role, may regulate transcriptional activity. This chain is SCAN domain-containing protein 1 (SCAND1), found in Pongo pygmaeus (Bornean orangutan).